Consider the following 166-residue polypeptide: Putative peptidyl-prolyl cis-trans isomerase dodo (166 aa).

The WW domain maps to 5 to 39 (EQLPDGWEKRTSRSTGMSYYLNMYTKESQWDQPTE). Positions 32–53 (SQWDQPTEPAKKAGGGSAGGGD) are disordered. The segment covering 44–53 (AGGGSAGGGD) has biased composition (gly residues). The PpiC domain occupies 55–166 (PDEVHCLHLL…SGLHIILRKA (112 aa)).

It carries out the reaction [protein]-peptidylproline (omega=180) = [protein]-peptidylproline (omega=0). This is Putative peptidyl-prolyl cis-trans isomerase dodo (dod) from Drosophila melanogaster (Fruit fly).